Here is a 299-residue protein sequence, read N- to C-terminus: Coenzyme PQQ synthesis protein B (299 aa).

Belongs to the PqqB family.

It functions in the pathway cofactor biosynthesis; pyrroloquinoline quinone biosynthesis. Its function is as follows. May be involved in the transport of PQQ or its precursor to the periplasm. This Methylorubrum extorquens (strain PA1) (Methylobacterium extorquens) protein is Coenzyme PQQ synthesis protein B.